The sequence spans 239 residues: MPSHYYLIIPASGVGVRMHPEKDGLNEQPKQYLKLDNGLTILDQTLKTLLSINQIKSCVIAIKNKDHLFAKSAFNNHPKLLTIVTGGKERMYSVLNALKALIDFAKDDDWVLVHDSVRPCVKASEIINLMKQLKHHATGGLLATKVVDTIKQADNNIINTTIDRSNLWQAQTPQMYRFSVLLKALNTAIKDGINITDETSAIEHLGLESILVKSSKSNIKVTNPEDLILANFYLNQHQK.

The protein belongs to the IspD/TarI cytidylyltransferase family. IspD subfamily.

The catalysed reaction is 2-C-methyl-D-erythritol 4-phosphate + CTP + H(+) = 4-CDP-2-C-methyl-D-erythritol + diphosphate. Its pathway is isoprenoid biosynthesis; isopentenyl diphosphate biosynthesis via DXP pathway; isopentenyl diphosphate from 1-deoxy-D-xylulose 5-phosphate: step 2/6. Its function is as follows. Catalyzes the formation of 4-diphosphocytidyl-2-C-methyl-D-erythritol from CTP and 2-C-methyl-D-erythritol 4-phosphate (MEP). The chain is 2-C-methyl-D-erythritol 4-phosphate cytidylyltransferase from Ruthia magnifica subsp. Calyptogena magnifica.